Consider the following 135-residue polypeptide: Retinol-binding protein 1 (135 aa).

At W9 the chain carries Omega-N-methylarginine. Positions 22-32 (RALDVNVALRK) are important for interaction with STRA6. All-trans-retinol contacts are provided by K41, M63, and Q109.

The protein belongs to the calycin superfamily. Fatty-acid binding protein (FABP) family. As to quaternary structure, interacts (only as retinol-free apoprotein) with STRA6. As to expression, detected in nearly all the tissues with higher expression in adult ovary, pancreas, pituitary gland and adrenal gland, and fetal liver.

Its subcellular location is the cytoplasm. It localises to the lipid droplet. In terms of biological role, cytoplasmic retinol-binding protein. Accepts retinol from the transport protein STRA6, and thereby contributes to retinol uptake, storage and retinoid homeostasis. This chain is Retinol-binding protein 1 (RBP1), found in Homo sapiens (Human).